Here is a 3898-residue protein sequence, read N- to C-terminus: Genome polyprotein (3898 aa).

The region spanning 1-168 is the Peptidase C53 domain; it reads MELNHFELLY…TDCPLWVTSC (168 aa). Residues E22, H49, and C69 each act as for N-terminal protease activity in the active site. A zinc-binding TRASH domain region spans residues 112-138; it reads CEVTKRIGRVTGSDGKLYHIYVCIDGC. N157 carries an N-linked (GlcNAc...) asparagine; by host glycan. A disordered region spans residues 221–242; sequence KGKVKGKNTQDGLYHNKNKPPE. Residues N269, N278, and N332 are each glycosylated (N-linked (GlcNAc...) asparagine; by host). 2 disulfide bridges follow: C305-C349 and C335-C336. 2 N-linked (GlcNAc...) asparagine; by host glycosylation sites follow: N362 and N367. 2 disulfide bridges follow: C377/C422 and C381/C405. N-linked (GlcNAc...) asparagine; by host glycosylation is found at N410, N425, N500, and N594. C693 and C737 are oxidised to a cystine. 5 N-linked (GlcNAc...) asparagine; by host glycosylation sites follow: N805, N810, N874, N918, and N949. The next 9 helical transmembrane spans lie at 1031 to 1051, 1070 to 1090, 1104 to 1124, 1140 to 1164, 1189 to 1209, 1217 to 1237, 1247 to 1267, 1281 to 1301, and 1360 to 1380; these read FIVL…LIVT, VVLI…YFLL, ILLL…VALL, QRLP…MLLA, LSTD…TYIS, LLQY…LKGV, LPSY…AVVT, VPTL…ILIL, and TMLP…WQFI. The region spanning 1441-1589 is the Peptidase C74 domain; it reads KELIIKHKVR…DLEHLGWVLR (149 aa). Catalysis depends on for cysteine protease NS2 activity residues H1447, E1461, and C1512. The chain crosses the membrane as a helical span at residues 1568 to 1588; sequence MLLVGNLGTEVGDLEHLGWVL. In terms of domain architecture, Peptidase S31 spans 1590–1763; sequence GPAVCKKVTE…LPIFEASSGR (174 aa). Active-site charge relay system; for serine protease NS3 activity residues include H1658 and D1695. The N-linked (GlcNAc...) asparagine; by host glycan is linked to N1713. S1752 acts as the Charge relay system; for serine protease NS3 activity in catalysis. The Helicase ATP-binding domain occupies 1802 to 1960; it reads ITTMNRGEFR…QKHPIEEYIA (159 aa). 1815–1822 contributes to the ATP binding site; sequence LATGAGKT. Positions 1910–1913 match the DEAH box motif; the sequence is DEYH. In terms of domain architecture, Helicase C-terminal spans 1978–2179; that stretch reads GLKIPVEEMK…ELPMAVKNIM (202 aa). N2134, N2217, N2419, N2494, N2787, N2815, and N2891 each carry an N-linked (GlcNAc...) asparagine; by host glycan. Residues 2968–2980 are compositionally biased toward low complexity; it reads PTMTTGETPTTFT. The interval 2968-2987 is disordered; it reads PTMTTGETPTTFTSSGPDPK. N3103, N3211, and N3316 each carry an N-linked (GlcNAc...) asparagine; by host glycan. Positions 3500 and 3502 each coordinate GTP. The RdRp catalytic domain occupies 3519–3642; it reads PVAVSFDTKA…ITERALGEKF (124 aa). N-linked (GlcNAc...) asparagine; by host glycosylation occurs at N3689. GTP is bound at residue R3697. N3698 carries N-linked (GlcNAc...) asparagine; by host glycosylation. K3705 is a binding site for GTP. N-linked (GlcNAc...) asparagine; by host glycosylation occurs at N3794.

Belongs to the pestivirus polyprotein family. In terms of assembly, interacts (via N-terminus) with host SP1; this interaction induces proteasomal degradation of SP1 with subsequent down-regulation of HDAC1 and ISG15 expression thereby counteracting the host innate immunity. Interacts (via C-terminus) with host IRF3. As to quaternary structure, interacts with host OS9. Homodimer; disulfide-linked. Interacts with host RPSA. In terms of assembly, homodimer; disulfide-linked. Heterodimer with E1; disulfide-linked. As to quaternary structure, homodimer; disulfide-linked. Heterodimer with E1; disulfide-linked. Interacts with host TRX2. Interacts with host receptor ADAM17 (via metalloproteinase domain); this interaction allows binding and probably entry of the virus into the host cell. Interacts with host ANXA2; this interaction allows binding and probably entry of the virus into the host cell. Interacts with host MERTK; this interaction allows binding and probably entry of the virus into the host cell. Interacts with host TRAF6; this interaction inhibits host NF-kappa-B pathway. Interacts with NS5B; this interaction enhances RNA-dependent RNA polymerase activity. Interacts with protein NS4A. In terms of assembly, interacts with host RAB5, this interaction facilitates the formation of NS4B-related complex. Interacts with host FTH1; this interaction plays a positive role in viral anti-apoptosis. As to quaternary structure, interacts with RNA-directed RNA polymerase. Interacts with host RSAD2; this interaction inhibits viral replication. Interacts with NS5A; this interaction promotes viral replication. In terms of processing, heavily glycosylated. The viral RNA of pestiviruses is expressed as a single polyprotein which undergoes post-translational proteolytic processing resulting in the production of at least eleven individual proteins. The N-terminal protease cleaves itself from the nascent polyprotein autocatalytically and thereby generates the N-terminus of the adjacent viral capsid protein C. Post-translationally, cleavage between E2 and p7 is partial.

The protein localises to the virion. The protein resides in the host membrane. It localises to the virion membrane. Its subcellular location is the host cell surface. It is found in the host cytoplasm. The catalysed reaction is Leu is conserved at position P1 for all four cleavage sites. Alanine is found at position P1' of the NS4A-NS4B cleavage site, whereas serine is found at position P1' of the NS3-NS4A, NS4B-NS5A and NS5A-NS5B cleavage sites.. It catalyses the reaction RNA(n) + a ribonucleoside 5'-triphosphate = RNA(n+1) + diphosphate. The enzyme catalyses a ribonucleoside 5'-triphosphate + H2O = a ribonucleoside 5'-diphosphate + phosphate + H(+). It carries out the reaction ATP + H2O = ADP + phosphate + H(+). Functionally, leader cysteine autoprotease that cleaves itself from the nascent polyprotein during translation of the viral mRNA. Once released, plays a role in the inhibition of host innate immune response by interacting with host IRF3 and inducing its proteasomal degradation. Packages viral RNA to form a viral nucleocapsid and thereby protects viral RNA. Also plays a role in transcription regulation. Protects the incoming virus against IFN-induced effectors. Its function is as follows. Plays a role in viral entry. Interacts with host RPSA that acts as a cellular attachment receptor for the virus. Also possesses intrinsic ribonuclease (RNase) activity that can inhibit the production of type I interferon and assist in the development of persistent infections. Cleaves preferentially NpU bonds. Binds to heparan sulfate on the host cells for entry. In terms of biological role, plays a role in cell attachment and subsequent fusion of viral and cellular membranes. Therefore, mediates together with envelope glycoprotein E2 the viral entry. Functionally, plays a role in cell attachment and subsequent fusion of viral and cellular membranes. Therefore, mediates together with envelope glycoprotein E1 the viral entry. Binds to host ADAM17 receptor for entry. Binds to host ANXA2 for entry. Binds to host MERTK for entry. Plays an essential role in the virus replication cycle by acting as a viroporin. Forms ion conductive pores, which alters the cell permeability allowing the transport of ions and other small molecules. Its function is as follows. Autoprotease that associates with the host chaperone JIV and cleaves the NS2-3 protein between NS2 and NS3. Also plays a role in the formation of infectious particles. In terms of biological role, plays a role in the regulation of viral RNA replication. Functionally, multifunctional protein that contains an N-terminal protease and a C-terminal helicase, playing essential roles in viral polyprotein processing and viral genome replication. The chymotrypsin-like serine protease activity utilizes NS4A as an essential cofactor and catalyzes the cleavage of the polyprotein leading to the release of NS4A, NS4B, NS5A, and NS5B. Plays a role in the inhibition of host NF-kappa-B activation by interacting with and inhibiting host TRAF6. Interacts with NS5B to enhance RNA-dependent RNA polymerase activity. Acts as a cofactor for the NS3 protease activity. Its function is as follows. Induces a specific membrane alteration that serves as a scaffold for the virus replication complex. Antagonizes host cell apoptosis by interacting with host ferritin heavy chain. The ORF4 protein physically binds host FTH1/FHC, resulting in the reduction of FTH1 protein levels in host cells. Reduction of FTH1 concentration further inhibits the accumulation of reactive oxygen in host cells, leading to reduced apoptosis. In terms of biological role, regulates viral RNA replication by interacting with the 3'-untranslated region of viral RNA in a dose-dependent manner. At small concentrations promotes viral synthesis by interacting with the polymerase NS5B while at large concentrations, inhibits replication. Functionally, replicates the viral (+) and (-) genome. This chain is Genome polyprotein, found in Sus scrofa (Pig).